A 208-amino-acid chain; its full sequence is Small ribosomal subunit protein uS2 (208 aa).

The protein belongs to the universal ribosomal protein uS2 family.

The protein is Small ribosomal subunit protein uS2 of Pyrobaculum calidifontis (strain DSM 21063 / JCM 11548 / VA1).